We begin with the raw amino-acid sequence, 280 residues long: uncharacterized protein (280 aa).

The next 3 helical transmembrane spans lie at 15 to 35 (IVDILLVAVILWIGVFIINRL), 68 to 88 (IGFIFYVISLFVHDFGKILAG), and 94 to 114 (IVIGFGAQSLIKDVLAGVFLI).

It belongs to the MscS (TC 1.A.23) family.

It is found in the cell membrane. In terms of biological role, may play a role in resistance to osmotic downshock. This is an uncharacterized protein from Bacillus subtilis (strain 168).